Reading from the N-terminus, the 498-residue chain is Acetyl-coenzyme A carboxylase carboxyl transferase subunit beta, chloroplastic (498 aa).

The 271-residue stretch at 228-498 (LWVQCEICYG…LNHNLSRTLT (271 aa)) folds into the CoA carboxyltransferase N-terminal domain. Residues Cys232, Cys235, Cys251, and Cys254 each contribute to the Zn(2+) site. A C4-type zinc finger spans residues 232 to 254 (CEICYGLNYKKFFKSKMNICEQC).

It belongs to the AccD/PCCB family. Acetyl-CoA carboxylase is a heterohexamer composed of biotin carboxyl carrier protein, biotin carboxylase and 2 subunits each of ACCase subunit alpha and ACCase plastid-coded subunit beta (accD). The cofactor is Zn(2+).

It is found in the plastid. The protein localises to the chloroplast stroma. The catalysed reaction is N(6)-carboxybiotinyl-L-lysyl-[protein] + acetyl-CoA = N(6)-biotinyl-L-lysyl-[protein] + malonyl-CoA. Its pathway is lipid metabolism; malonyl-CoA biosynthesis; malonyl-CoA from acetyl-CoA: step 1/1. In terms of biological role, component of the acetyl coenzyme A carboxylase (ACC) complex. Biotin carboxylase (BC) catalyzes the carboxylation of biotin on its carrier protein (BCCP) and then the CO(2) group is transferred by the transcarboxylase to acetyl-CoA to form malonyl-CoA. The sequence is that of Acetyl-coenzyme A carboxylase carboxyl transferase subunit beta, chloroplastic from Populus trichocarpa (Western balsam poplar).